The sequence spans 493 residues: Cytochrome P450 monooxygenase olcG (493 aa).

The chain crosses the membrane as a helical span at residues 15–35 (GILATGALVIFVALFLATFQF). Heme is bound at residue cysteine 429.

Belongs to the cytochrome P450 family. Heme is required as a cofactor.

The protein resides in the membrane. Its pathway is secondary metabolite biosynthesis; terpenoid biosynthesis. Its function is as follows. Cytochrome P450 monooxygenase; part of the gene cluster that mediates the biosynthesis of 15-deoxyoxalicine B. The first step of the pathway is the synthesis of nicotinyl-CoA from nicotinic acid by the nicotinic acid-CoA ligase olcI. Nicotinyl-CoA is then a substrate of polyketide synthase olcA to produce 4-hydroxy-6-(3-pyridinyl)-2H-pyran-2-one (HPPO) which is further prenylated by the polyprenyl transferase olcH to yield geranylgeranyl-HPPO. Geranylgeranyl pyrophosphate is provided by the cluster-specific geranylgeranyl pyrophosphate synthase olcC. The FAD-dependent monooxygenase olcE catalyzes the epoxidation of geranylgeranyl-HPPO and the terpene cyclase olcD catalyzes the cyclization of the terpenoid component, resulting in the formation of the tricyclic terpene moiety seen in predecaturin E. The cytochrome P450 monooxygenase then catalyzes the allylic oxidation of predecaturin E, which is followed by spirocylization with concomitant loss of one molecule of water to form decaturin E. Decaturin E is the substrate of the cytochrome P450 monooxygenase olcJ which hydroxylates it at the C-29 position to form decaturin F. The short-chain dehydrogenase/reductase olcF may catalyze the oxidation of decaturin F to generate the 29-hydroxyl-27-one intermediate, and subsequent hemiacetal formation probably leads to the formation of decaturin C. The dioxygenase olcK may be a peroxisomal enzyme that catalyzes the hydroxylation of decaturin C into decaturin A once decaturin C is shuttled into the peroxisome by the MFS transporter olcL. Finally the cytochrome P450 monooxygenase olcB catalyzes the oxidative rearrangement to yield 15-deoxyoxalicine B. In the absence of olcJ, decaturin E may be shunted to a pathway in which it is oxidized to a ketone, possibly by olcF, to form decaturin D, which undergoes further allylic oxidation to yield decaturin G. Moreover, in the absence of oclK or oclL, oclB can convert decaturin C into 15-deoxyoxalicine A. This Penicillium canescens protein is Cytochrome P450 monooxygenase olcG.